A 243-amino-acid polypeptide reads, in one-letter code: Methylthioribulose-1-phosphate dehydratase (243 aa).

The tract at residues 1–22 (MCPADQTVATNNNDHLVQSEDP) is disordered. Residues 7-16 (TVATNNNDHL) show a composition bias toward polar residues. Residue Cys103 participates in substrate binding. The Zn(2+) site is built by His120 and His122. The active-site Proton donor/acceptor is the Glu149. Residue His205 participates in Zn(2+) binding.

This sequence belongs to the aldolase class II family. MtnB subfamily. Zn(2+) is required as a cofactor.

Its subcellular location is the cytoplasm. It carries out the reaction 5-(methylsulfanyl)-D-ribulose 1-phosphate = 5-methylsulfanyl-2,3-dioxopentyl phosphate + H2O. It functions in the pathway amino-acid biosynthesis; L-methionine biosynthesis via salvage pathway; L-methionine from S-methyl-5-thio-alpha-D-ribose 1-phosphate: step 2/6. Its function is as follows. Catalyzes the dehydration of methylthioribulose-1-phosphate (MTRu-1-P) into 2,3-diketo-5-methylthiopentyl-1-phosphate (DK-MTP-1-P). This Penicillium rubens (strain ATCC 28089 / DSM 1075 / NRRL 1951 / Wisconsin 54-1255) (Penicillium chrysogenum) protein is Methylthioribulose-1-phosphate dehydratase.